Consider the following 81-residue polypeptide: MAFLKKSLFLVLFLGLVSLSICEEEKRENEDEEEQEDDEQSEMKRGLWSKIKEVGKEAAKAAAKAAGKAALGAVSEAVGEQ.

The signal sequence occupies residues 1–22; sequence MAFLKKSLFLVLFLGLVSLSIC. The propeptide occupies 23-43; that stretch reads EEEKRENEDEEEQEDDEQSEM. The disordered stretch occupies residues 24-46; sequence EEKRENEDEEEQEDDEQSEMKRG. Residues 30–40 show a composition bias toward acidic residues; it reads EDEEEQEDDEQ. Residues 54-55 are hinge region that separates the two alpha-helices that constitute the peptide; sequence VG. A Valine amide modification is found at V78. The propeptide occupies 80-81; the sequence is EQ.

In terms of processing, amidation permits an increased antimicrobial activity against some microorganisms such as T.album and S.cerevisiae. May contain a D-amino acid residue, since the natural peptide is not identical in chromatographic properties to the synthetic peptide. Expressed by the skin glands.

It localises to the secreted. It is found in the target cell membrane. Its function is as follows. Cationic amphipathic alpha-helical antimicrobial peptide with potent activity against Gram-negative and Gram-positive bacteria, fungi and protozoa. Acts in a synergistic effect in combination with Plasticin-B1 at doses that are not active alone. Acts by disturbing membrane functions. On model membranes, induces a strong perturbation of anionic lipid bilayers, resides at the hydrocarbon core-water interface, parallel to the plane of the membrane, and interacts preferentially with the polar head groups and glycerol backbone region of the anionic phospholipids, as well as the region of the lipid acyl chain near the bilayer surface. Induces a positive curvature of the bilayer and clustering of anionic lipids, consistent with a carpet mechanism, that may lead to the formation of mixed peptide-phospholipid toroidal, transient pores and membrane permeation/disruption once a threshold peptide accumulation is reached. Also enhances binding of agonists to adenosine A1 receptors (ADORA1), adenosine A2a receptors (ADORA2A), alpha-2 adrenergic receptors (ADRA2A) and 5-hydroxytryptamine 1A receptors (HTR1A). In addition, it enhances guanyl nucleotide exchange which may result in the conversion of receptors to a high affinity state complexed with guanyl nucleotide free G-protein. Affects human behavior eliciting profound malaise, followed by listlessness and then euphoria. Does not show cytotoxic activity on CHO cells. Does not act as a chemoattractant. Does not show hemolytic activity. This is Dermaseptin-B2 (ADR) from Phyllomedusa bicolor (Two-colored leaf frog).